The following is a 273-amino-acid chain: uncharacterized protein (273 aa).

The protein localises to the virion. This is an uncharacterized protein from Acanthamoeba polyphaga (Amoeba).